The primary structure comprises 174 residues: Ferredoxin-2, mitochondrial (174 aa).

The N-terminal 43 residues, 1–43 (MAASMARGVSARVLLRAAGGSWGPRAGHAAVTSRTFGTTGERR), are a transit peptide targeting the mitochondrion. Positions 26–52 (AGHAAVTSRTFGTTGERRAGEEAADSP) are disordered. The 2Fe-2S ferredoxin-type domain occupies 59-161 (VNVVFVDRSG…GVEFALPKIT (103 aa)). Residues Cys-96, Cys-102, Cys-105, and Cys-142 each coordinate [2Fe-2S] cluster.

It belongs to the adrenodoxin/putidaredoxin family. In terms of assembly, component of the mitochondrial core iron-sulfur cluster (ISC) complex composed of NFS1, LYRM4, NDUFAB1, ISCU, FXN, and FDX2; this complex is a heterohexamer containing two copies of each monomer. Form a heterodimer complex with NFS1. Interacts (in both their reduced and oxidized states) with the cysteine desulfurase (NFS1:LYRM4) complex; this interaction stimulates cysteine desulfurase activity, and serves as a reductant for Fe-S cluster assembly. It depends on [2Fe-2S] cluster as a cofactor.

The protein localises to the mitochondrion. The protein resides in the mitochondrion matrix. Electron donor, of the core iron-sulfur cluster (ISC) assembly complex, that acts to reduce the persulfide into sulfide during [2Fe-2S] clusters assembly on the scaffolding protein ISCU. The core iron-sulfur cluster (ISC) assembly complex is involved in the de novo synthesis of a [2Fe-2S] cluster, the first step of the mitochondrial iron-sulfur protein biogenesis. This process is initiated by the cysteine desulfurase complex (NFS1:LYRM4:NDUFAB1) that produces persulfide which is delivered on the scaffold protein ISCU in a FXN-dependent manner. Then this complex is stabilized by FDX2 which provides reducing equivalents to accomplish the [2Fe-2S] cluster assembly. Finally, the [2Fe-2S] cluster is transferred from ISCU to chaperone proteins, including HSCB, HSPA9 and GLRX5. Essential for coenzyme Q biosynthesis: together with FDXR, transfers the electrons required for the hydroxylation reaction performed by COQ6. This chain is Ferredoxin-2, mitochondrial, found in Mus musculus (Mouse).